We begin with the raw amino-acid sequence, 366 residues long: MTTTGIIAEFNPFHNGHKYLLDQAHGLKIVAMSGNFVQRGEPAIIDKWTRAQMALENGADLVVELPFLVAVQSADYFASGAVDILAKLGIDTLAFGTETALDYNGLSTIYGKMAEQMSEFLTTLPEKLSYPQKTQLMWEKFAGVQFTGDTPNHILALAYAKACAGRNIRLRPIQRRGADYHSTEKTVAYASATSLRHHRQDPAFVAKSMPNANLFQTSPQVTWEDYFTLLQYQVLTQPDLTQLFQVNEELAIRIKKAIRQVTSFDQLVETVATKRYTKARVRRILIYILIGARETSLPQDVHILGFTAAGRTHLSHIKNKTRIISRIGSQPWDALTQQADQVYQLGNPKIAEQTWGRVPIRIDNTV.

ATP is bound by residues 7–20 (IAEFNPFHNGHKYL), G96, N152, and R175.

The protein belongs to the TmcAL family.

It is found in the cytoplasm. The enzyme catalyses cytidine(34) in elongator tRNA(Met) + acetate + ATP = N(4)-acetylcytidine(34) in elongator tRNA(Met) + AMP + diphosphate. In terms of biological role, catalyzes the formation of N(4)-acetylcytidine (ac(4)C) at the wobble position of elongator tRNA(Met), using acetate and ATP as substrates. First activates an acetate ion to form acetyladenylate (Ac-AMP) and then transfers the acetyl group to tRNA to form ac(4)C34. The polypeptide is tRNA(Met) cytidine acetate ligase (Streptococcus mutans serotype c (strain ATCC 700610 / UA159)).